The following is a 257-amino-acid chain: Imidazole glycerol phosphate synthase subunit HisF (257 aa).

Active-site residues include D11 and D130.

It belongs to the HisA/HisF family. As to quaternary structure, heterodimer of HisH and HisF.

It localises to the cytoplasm. It catalyses the reaction 5-[(5-phospho-1-deoxy-D-ribulos-1-ylimino)methylamino]-1-(5-phospho-beta-D-ribosyl)imidazole-4-carboxamide + L-glutamine = D-erythro-1-(imidazol-4-yl)glycerol 3-phosphate + 5-amino-1-(5-phospho-beta-D-ribosyl)imidazole-4-carboxamide + L-glutamate + H(+). It participates in amino-acid biosynthesis; L-histidine biosynthesis; L-histidine from 5-phospho-alpha-D-ribose 1-diphosphate: step 5/9. IGPS catalyzes the conversion of PRFAR and glutamine to IGP, AICAR and glutamate. The HisF subunit catalyzes the cyclization activity that produces IGP and AICAR from PRFAR using the ammonia provided by the HisH subunit. In Aliivibrio fischeri (strain ATCC 700601 / ES114) (Vibrio fischeri), this protein is Imidazole glycerol phosphate synthase subunit HisF.